Consider the following 303-residue polypeptide: tRNA pseudouridine synthase A (303 aa).

The active-site Nucleophile is the Asp59. Tyr128 contacts substrate.

It belongs to the tRNA pseudouridine synthase TruA family. As to quaternary structure, homodimer.

The catalysed reaction is uridine(38/39/40) in tRNA = pseudouridine(38/39/40) in tRNA. Formation of pseudouridine at positions 38, 39 and 40 in the anticodon stem and loop of transfer RNAs. This is tRNA pseudouridine synthase A from Bifidobacterium longum (strain DJO10A).